A 349-amino-acid polypeptide reads, in one-letter code: Phenylalanine--tRNA ligase alpha subunit (349 aa).

Glu-258 contacts Mg(2+).

This sequence belongs to the class-II aminoacyl-tRNA synthetase family. Phe-tRNA synthetase alpha subunit type 1 subfamily. Tetramer of two alpha and two beta subunits. The cofactor is Mg(2+).

The protein localises to the cytoplasm. The catalysed reaction is tRNA(Phe) + L-phenylalanine + ATP = L-phenylalanyl-tRNA(Phe) + AMP + diphosphate + H(+). This is Phenylalanine--tRNA ligase alpha subunit from Rickettsia conorii (strain ATCC VR-613 / Malish 7).